The sequence spans 964 residues: Glycine dehydrogenase (decarboxylating) (964 aa).

Positions 1 to 11 (MNSTLQNQTKT) are enriched in polar residues. The tract at residues 1 to 21 (MNSTLQNQTKTNLEKVGTDPL) is disordered. At Lys-713 the chain carries N6-(pyridoxal phosphate)lysine.

Belongs to the GcvP family. As to quaternary structure, the glycine cleavage system is composed of four proteins: P, T, L and H. Requires pyridoxal 5'-phosphate as cofactor.

The catalysed reaction is N(6)-[(R)-lipoyl]-L-lysyl-[glycine-cleavage complex H protein] + glycine + H(+) = N(6)-[(R)-S(8)-aminomethyldihydrolipoyl]-L-lysyl-[glycine-cleavage complex H protein] + CO2. Its function is as follows. The glycine cleavage system catalyzes the degradation of glycine. The P protein binds the alpha-amino group of glycine through its pyridoxal phosphate cofactor; CO(2) is released and the remaining methylamine moiety is then transferred to the lipoamide cofactor of the H protein. In Leptospira interrogans serogroup Icterohaemorrhagiae serovar Lai (strain 56601), this protein is Glycine dehydrogenase (decarboxylating).